We begin with the raw amino-acid sequence, 293 residues long: Ribosomal protein L11 methyltransferase (293 aa).

4 residues coordinate S-adenosyl-L-methionine: threonine 145, glycine 166, aspartate 188, and asparagine 230.

The protein belongs to the methyltransferase superfamily. PrmA family.

Its subcellular location is the cytoplasm. The enzyme catalyses L-lysyl-[protein] + 3 S-adenosyl-L-methionine = N(6),N(6),N(6)-trimethyl-L-lysyl-[protein] + 3 S-adenosyl-L-homocysteine + 3 H(+). Methylates ribosomal protein L11. The polypeptide is Ribosomal protein L11 methyltransferase (Escherichia coli O8 (strain IAI1)).